The chain runs to 154 residues: NADPH-dependent 7-cyano-7-deazaguanine reductase (154 aa).

Residues 1-13 (MSKTDVSGLSQLG) show a composition bias toward polar residues. Residues 1-24 (MSKTDVSGLSQLGRQVDAPTSPET) form a disordered region. Cys52 acts as the Thioimide intermediate in catalysis. Asp59 (proton donor) is an active-site residue. Residues 74–76 (VES) and 93–94 (HE) contribute to the substrate site.

It belongs to the GTP cyclohydrolase I family. QueF type 1 subfamily.

Its subcellular location is the cytoplasm. It carries out the reaction 7-aminomethyl-7-carbaguanine + 2 NADP(+) = 7-cyano-7-deazaguanine + 2 NADPH + 3 H(+). It participates in tRNA modification; tRNA-queuosine biosynthesis. In terms of biological role, catalyzes the NADPH-dependent reduction of 7-cyano-7-deazaguanine (preQ0) to 7-aminomethyl-7-deazaguanine (preQ1). In Allorhizobium ampelinum (strain ATCC BAA-846 / DSM 112012 / S4) (Agrobacterium vitis (strain S4)), this protein is NADPH-dependent 7-cyano-7-deazaguanine reductase.